A 158-amino-acid chain; its full sequence is Protein-export protein SecB (158 aa).

The protein belongs to the SecB family. Homotetramer, a dimer of dimers. One homotetramer interacts with 1 SecA dimer.

It localises to the cytoplasm. Functionally, one of the proteins required for the normal export of preproteins out of the cell cytoplasm. It is a molecular chaperone that binds to a subset of precursor proteins, maintaining them in a translocation-competent state. It also specifically binds to its receptor SecA. In Rhodopseudomonas palustris (strain BisB5), this protein is Protein-export protein SecB.